Consider the following 1031-residue polypeptide: Telomerase reverse transcriptase (1031 aa).

The Reverse transcriptase domain maps to 498-852 (KEVEEWKKSL…DYCDWIGISI (355 aa)). Positions 603, 781, and 782 each coordinate Mg(2+).

It belongs to the reverse transcriptase family. Telomerase subfamily. Component of the telomerase holoenzyme complex composed minimally of the catalytic subunit p123 and the telomerase RNA template component.

The protein resides in the nucleus. Its subcellular location is the chromosome. The protein localises to the telomere. It carries out the reaction DNA(n) + a 2'-deoxyribonucleoside 5'-triphosphate = DNA(n+1) + diphosphate. Functionally, telomerase is a ribonucleoprotein enzyme essential for the replication of chromosome termini in most eukaryotes. It elongates telomeres. It is a reverse transcriptase that adds simple sequence repeats to chromosome ends by copying a template sequence within the RNA component of the enzyme. The chain is Telomerase reverse transcriptase from Euplotes aediculatus (Ciliate).